Reading from the N-terminus, the 96-residue chain is Large ribosomal subunit protein uL23 (96 aa).

This sequence belongs to the universal ribosomal protein uL23 family. Part of the 50S ribosomal subunit. Contacts protein L29, and trigger factor when it is bound to the ribosome.

Its function is as follows. One of the early assembly proteins it binds 23S rRNA. One of the proteins that surrounds the polypeptide exit tunnel on the outside of the ribosome. Forms the main docking site for trigger factor binding to the ribosome. The sequence is that of Large ribosomal subunit protein uL23 from Vesicomyosocius okutanii subsp. Calyptogena okutanii (strain HA).